The chain runs to 298 residues: MDTSTVLEKYTQDLSNLPLEVRHLLEEIKSKDVQVSEARKRYQTRDHQLHKFIRTNGTLTKHPKEDQLYSKIEEDMKLVQKLQKEKILLANTALFLISKHLYHFETDIAKLERDELLPPLEHPIELTEVSKDEYAKSLNGFSDSASATPTPRNGSSATPVAETVKKIQKKKLSVKGASSSSAQSSSASRQVKRLRSEEIEDPLPYEGGSLAFNGNVAMSINSAADANGPNGEDADNNLYCFCQRVSFGEMIGCDNEDCKYEWFHWSCVGITSPPKDDEIWYCPDCASKMEKRKKKRKN.

Residues 20–86 (EVRHLLEEIK…KLVQKLQKEK (67 aa)) are a coiled coil. Over residues 140–158 (GFSDSASATPTPRNGSSAT) the composition is skewed to polar residues. Residues 140–206 (GFSDSASATP…EEIEDPLPYE (67 aa)) form a disordered region. Residues 174–188 (VKGASSSSAQSSSAS) show a composition bias toward low complexity. The PHD-type zinc-finger motif lies at 237 to 288 (NLYCFCQRVSFGEMIGCDNEDCKYEWFHWSCVGITSPPKDDEIWYCPDCASK). Zn(2+) is bound by residues cysteine 240, cysteine 242, cysteine 253, cysteine 258, histidine 264, cysteine 267, cysteine 282, and cysteine 285.

It belongs to the ING family. As to quaternary structure, interacts with H3K4me3 and to a lesser extent with H3K4me2. Component of the NuA4 histone acetyltransferase complex.

The protein localises to the nucleus. Component of the NuA4 histone acetyltransferase complex which is involved in transcriptional activation of selected genes principally by acetylation of nucleosomal histone H4 and H2A. The NuA4 complex is also involved in DNA repair. Involved in cell cycle progression and meiosis. This is Chromatin modification-related protein YNG2 (YNG2) from Candida albicans (strain SC5314 / ATCC MYA-2876) (Yeast).